A 72-amino-acid chain; its full sequence is UPF0154 protein YneF (72 aa).

A helical membrane pass occupies residues 4-24 (WVGILVGVVALLIGVALGFFI).

The protein belongs to the UPF0154 family.

Its subcellular location is the membrane. This chain is UPF0154 protein YneF (yneF), found in Bacillus subtilis (strain 168).